Here is a 116-residue protein sequence, read N- to C-terminus: Ribonuclease P protein component (116 aa).

The protein belongs to the RnpA family. Consists of a catalytic RNA component (M1 or rnpB) and a protein subunit.

It catalyses the reaction Endonucleolytic cleavage of RNA, removing 5'-extranucleotides from tRNA precursor.. In terms of biological role, RNaseP catalyzes the removal of the 5'-leader sequence from pre-tRNA to produce the mature 5'-terminus. It can also cleave other RNA substrates such as 4.5S RNA. The protein component plays an auxiliary but essential role in vivo by binding to the 5'-leader sequence and broadening the substrate specificity of the ribozyme. This Leuconostoc citreum (strain KM20) protein is Ribonuclease P protein component.